A 504-amino-acid polypeptide reads, in one-letter code: METFDAIQLPYPGVVGASLLVILGIILLFPLDTGHFISINQHPWDFFQTKAKQEFEYNAAALLNEGLQTGRSAFRLVTNMVTYLILKDQYAEEIKNDSRFGAHEAVDPVLLVDLPGLETMFQGSLHNQVPPMAVRALNKELVHLTPFLSEEAMNCLQTRWTDSAEWHDVSIPETVLALIAQMTTRALLGPALCRNPEWLDIAKSFTTNRAIAVAAVQSWPSFLQPVIHWFLSPCRALRRQIQCARNILLPVLERERRSYRSDQPTKREFSNLAFIDQYAKGARYDATMAQLRIIAVAFQTTSDLVEKVIARLCKHPELIQPLREEVVSVVGKNGLHSHSLRKLTLMESVMKETQRLEPAVIIGMFRLAKEKVTLKDGTVIPKGTNIAFANDLRFDPEMYPEPETFDGYRFQRMREDPEKIDLTPFTKTRMSHLAFGHGKHACPGRFLACDEAKLILCHILLKYEIRAVEGSPPELRARGMFVQLDPGAMMSVRRRRENEFALHG.

Residues 9-29 (LPYPGVVGASLLVILGIILLF) form a helical membrane-spanning segment. Residue C442 coordinates heme.

Belongs to the cytochrome P450 family. The cofactor is heme.

It is found in the membrane. The catalysed reaction is fumitremorgin C + 2 reduced [NADPH--hemoprotein reductase] + 2 O2 = 12alpha,13alpha-dihydroxyfumitremorgin C + 2 oxidized [NADPH--hemoprotein reductase] + 2 H2O + 2 H(+). It participates in mycotoxin biosynthesis. Its function is as follows. Cytochrome P450 monooxygenase; part of the gene cluster that mediates the biosynthesis of fumitremorgins, indole alkaloids that carry not only intriguing chemical structures, but also interesting biological and pharmacological activities. The biosynthesis of fumitremorgin-type alkaloids begins by condensation of the two amino acids L-tryptophan and L-proline to brevianamide F, catalyzed by the non-ribosomal peptide synthetase ftmPS/ftmA. Brevianamide F is then prenylated by the prenyltransferase ftmPT1/ftmB in the presence of dimethylallyl diphosphate, resulting in the formation of tryprostatin B. The three cytochrome P450 monooxygenases, ftmP450-1/ftmC, ftmP450-2/ftmE and ftmP450-3/FtmG, are responsible for the conversion of tryprostatin B to 6-hydroxytryprostatin B, tryprostatin A to fumitremorgin C and fumitremorgin C to 12,13-dihydroxyfumitremorgin C, respectively. The putative methyltransferase ftmMT/ftmD is expected for the conversion of 6-hydroxytryprostatin B to tryprostatin A. FtmPT2/FtmH catalyzes the prenylation of 12,13-dihydroxyfumitre-morgin C in the presence of dimethylallyl diphosphate, resulting in the formation of fumitremorgin B. Fumitremorgin B is further converted to verruculogen by ftmOx1/ftmF via the insertion of an endoperoxide bond between the two prenyl moieties. Finally, verruculogen is further converted to fumitremorgin A by the verruculogen prenyltransferase ftmPT3. The sequence is that of Fumitremorgin C monooxygenase from Neosartorya fischeri (strain ATCC 1020 / DSM 3700 / CBS 544.65 / FGSC A1164 / JCM 1740 / NRRL 181 / WB 181) (Aspergillus fischerianus).